A 190-amino-acid chain; its full sequence is MNNNLPTGSIAAVVDLLNKENVIAYPTEAVFGVGCDPDSETAVTRLLALKQRPVDKGLILIAASFEQLKPYIDDSILTAAQRKAVFDCWPGPVTFVFPAPATTPRWLTGRFDSLAVRVTNHPLVVALCNAYGKPLVSTSANLSGLPPCRTVEEVRAQFGDDFPVVEGATGGRLKPSEIRDALTGELFRQG.

Residues 7–190 (TGSIAAVVDL…ALTGELFRQG (184 aa)) enclose the YrdC-like domain.

It belongs to the SUA5 family. TsaC subfamily.

It is found in the cytoplasm. It carries out the reaction L-threonine + hydrogencarbonate + ATP = L-threonylcarbamoyladenylate + diphosphate + H2O. In terms of biological role, required for the formation of a threonylcarbamoyl group on adenosine at position 37 (t(6)A37) in tRNAs that read codons beginning with adenine. Catalyzes the conversion of L-threonine, HCO(3)(-)/CO(2) and ATP to give threonylcarbamoyl-AMP (TC-AMP) as the acyladenylate intermediate, with the release of diphosphate. The protein is Threonylcarbamoyl-AMP synthase of Salmonella paratyphi A (strain ATCC 9150 / SARB42).